Reading from the N-terminus, the 400-residue chain is Delta(12) fatty acid desaturase (400 aa).

A helical transmembrane segment spans residues 91 to 111 (LAWPAYWIMQGIVCTGIWVLA). The Histidine box-1 motif lies at 112 to 116 (HECGH). A Histidine box-2 motif is present at residues 148-152 (HSKHH). Transmembrane regions (helical) follow at residues 199-219 (IVTL…YLIM), 245-265 (FFDI…LIYA), and 277-297 (YYIV…FLQH). The Histidine box-3 signature appears at 339-343 (HVAHH).

This sequence belongs to the fatty acid desaturase type 1 family.

Its subcellular location is the membrane. It catalyses the reaction (9Z)-octadecenoyl-CoA + 2 Fe(II)-[cytochrome b5] + O2 + 2 H(+) = (9Z,12Z)-octadecadienoyl-CoA + 2 Fe(III)-[cytochrome b5] + 2 H2O. The enzyme catalyses (9Z)-hexadecenoyl-CoA + 2 Fe(II)-[cytochrome b5] + O2 + 2 H(+) = (9Z,12Z)-hexadecadienoyl-CoA + 2 Fe(III)-[cytochrome b5] + 2 H2O. Its pathway is lipid metabolism; polyunsaturated fatty acid biosynthesis. Catalyzes the desaturation of oleic acid (Delta(9)-18:1) to linoleic acid (Delta(9), Delta(12)-18:2). This is Delta(12) fatty acid desaturase from Mortierella alpina (Oleaginous fungus).